A 161-amino-acid polypeptide reads, in one-letter code: Allophycocyanin beta chain (161 aa).

Asn71 is subject to N4-methylasparagine. Cys81 is a (2R,3E)-phycocyanobilin binding site.

The protein belongs to the phycobiliprotein family. Heterodimer of an alpha and a beta chain. Post-translationally, contains one covalently linked phycocyanobilin chromophore.

Its subcellular location is the cellular thylakoid membrane. Its function is as follows. Light-harvesting photosynthetic bile pigment-protein from the phycobiliprotein complex. Allophycocyanin has a maximum absorption at approximately 650 nanometers. This is Allophycocyanin beta chain (apcB) from Synechocystis sp. (strain PCC 6714) (Aphanocapsa sp. (strain PCC 6714)).